A 37-amino-acid chain; its full sequence is Calcitonin gene-related peptide 1 (37 aa).

C2 and C7 are disulfide-bonded. Position 37 is a phenylalanine amide (F37).

This sequence belongs to the calcitonin family.

It is found in the secreted. Its function is as follows. CGRP1/CALCA is a peptide hormone that induces vasodilation mediated by the CALCRL-RAMP1 receptor complex. Dilates a variety of vessels including the coronary, cerebral and systemic vasculature. Its abundance in the CNS also points toward a neurotransmitter or neuromodulator role. It also elevates platelet cAMP. CGRP1 can also bind and activate CALCR-RAMP1 (AMYR1) receptor complex. This Ovis aries (Sheep) protein is Calcitonin gene-related peptide 1 (CALCA).